A 284-amino-acid chain; its full sequence is MSDIVYANVSHYNKIEASKYDNPSTLAISKVISSKILQFEDNSETSLRHDLPKYDQDRLLLTSDDDLTNVNNFWKKSGMSILDFACGTGLISQHLFPYCKQIVGIDVSQDMVDVYNEKFRKMNIPKERACAYVLSLDDLDGNGDEPFSTEFDAVVCSMAYHHIKDLQEVTNKLSKLLKPNGRLFVADLIKGGDTFHGNLHPDEIAKLGVAHHGGFTPQSILNLFKNASLSNAEVIGKAQANVWVDEAKYQRSTQSKDAKTLDLANGEKLYEVKLQLMVISGIKT.

It belongs to the methyltransferase superfamily.

It localises to the cytoplasm. It is found in the nucleus. Functionally, probable methyltransferase. This is an uncharacterized protein from Schizosaccharomyces pombe (strain 972 / ATCC 24843) (Fission yeast).